The sequence spans 1161 residues: Nuclear pore complex-interacting protein family member B11 (1161 aa).

Residues 63–87 (IIIAFPTSYKVVITLWIVYLWVSLL) form a helical membrane-spanning segment. Disordered stretches follow at residues 278–580 (ADDN…DDNI) and 892–1161 (SADD…RRLS). A compositionally biased stretch (pro residues) spans 311–321 (PLPPSAPPSAP). Basic and acidic residues-rich tracts occupy residues 368–378 (DNIKTTAERLR), 410–420 (DNIKTPAEHLR), 452–462 (DNIKTPAERLR), 494–504 (DNIKTPAEHLR), 536–546 (DNIKTTAEHLR), 918–928 (DNIKTPAERLR), 960–970 (DNIKTPAERLR), 1002–1012 (DNIKTPAERLR), and 1044–1054 (DNIKTPAERLR).

Belongs to the NPIP family.

It localises to the membrane. This Homo sapiens (Human) protein is Nuclear pore complex-interacting protein family member B11 (NPIPB11).